We begin with the raw amino-acid sequence, 294 residues long: Phosphatidylglycerol--prolipoprotein diacylglyceryl transferase (294 aa).

The next 7 membrane-spanning stretches (helical) occupy residues 21–41 (VSLHWYGMMYLIGFVFALWLA), 60–80 (LLYVGFVGVFIGGRLGYVLFY), 96–116 (WDGGMSFHGGLIGVICAMIWF), 124–144 (FFQVADFVAPLIPFGLGLGRI), 199–219 (SQLYEMFLEGVVLFIILNIFV), 226–246 (GSVSGLFLIGYGAFRIIVEFF), and 259–279 (ISMGQILSIPMIILGIIFMVW). R143 provides a ligand contact to a 1,2-diacyl-sn-glycero-3-phospho-(1'-sn-glycerol).

It belongs to the Lgt family.

The protein localises to the cell inner membrane. It catalyses the reaction L-cysteinyl-[prolipoprotein] + a 1,2-diacyl-sn-glycero-3-phospho-(1'-sn-glycerol) = an S-1,2-diacyl-sn-glyceryl-L-cysteinyl-[prolipoprotein] + sn-glycerol 1-phosphate + H(+). Its pathway is protein modification; lipoprotein biosynthesis (diacylglyceryl transfer). Its function is as follows. Catalyzes the transfer of the diacylglyceryl group from phosphatidylglycerol to the sulfhydryl group of the N-terminal cysteine of a prolipoprotein, the first step in the formation of mature lipoproteins. The chain is Phosphatidylglycerol--prolipoprotein diacylglyceryl transferase from Proteus mirabilis (strain HI4320).